An 861-amino-acid chain; its full sequence is Valine--tRNA ligase (861 aa).

The 'HIGH' region signature appears at 42–52; it reads PNITGRIHMGH. The 'KMSKS' region motif lies at 521 to 525; it reads KMSKS. Residue Lys-524 participates in ATP binding. Residues 792-861 adopt a coiled-coil conformation; that stretch reads VAGLNLQSEI…ILNQILGDLM (70 aa).

The protein belongs to the class-I aminoacyl-tRNA synthetase family. ValS type 1 subfamily. In terms of assembly, monomer.

The protein localises to the cytoplasm. The catalysed reaction is tRNA(Val) + L-valine + ATP = L-valyl-tRNA(Val) + AMP + diphosphate. Functionally, catalyzes the attachment of valine to tRNA(Val). As ValRS can inadvertently accommodate and process structurally similar amino acids such as threonine, to avoid such errors, it has a 'posttransfer' editing activity that hydrolyzes mischarged Thr-tRNA(Val) in a tRNA-dependent manner. This is Valine--tRNA ligase from Pseudothermotoga lettingae (strain ATCC BAA-301 / DSM 14385 / NBRC 107922 / TMO) (Thermotoga lettingae).